We begin with the raw amino-acid sequence, 197 residues long: Histone chaperone asf1b-A (197 aa).

This sequence belongs to the ASF1 family. As to quaternary structure, interacts with histone H3 and histone H4.

Its subcellular location is the nucleus. In terms of biological role, histone chaperone that facilitates histone deposition and histone exchange and removal during nucleosome assembly and disassembly. The protein is Histone chaperone asf1b-A (asf1ba) of Danio rerio (Zebrafish).